The following is a 67-amino-acid chain: Protein AaeX (67 aa).

2 helical membrane passes run 3–23 (LFPVIVVFGLSFPPIFFELLL) and 47–67 (PALFNTALYCCLFYLISRLFV).

This sequence belongs to the AaeX family.

The protein localises to the cell membrane. The polypeptide is Protein AaeX (Escherichia coli O157:H7).